The following is a 288-amino-acid chain: THO complex subunit 4D (288 aa).

The disordered stretch occupies residues 1–55 (MSGALNMTLDEIVKRGKTARSGGRGISRGRGRGRGGGGRGAGPARRGPLAVNARP). S2 is subject to N-acetylserine. Residues 93–170 (TRLHVTNLDQ…RPMRLEILGG (78 aa)) form the RRM domain. A disordered region spans residues 201–288 (QGGGGRGRVR…SYHADAMNTS (88 aa)). A compositionally biased stretch (gly residues) spans 232–260 (QGGGMRGGRGGFRARGRGNGGRGRGGGRG). Residues 264–281 (KPVEKSAADLDKDLESYH) are compositionally biased toward basic and acidic residues.

Belongs to the ALYREF family. Interacts with PARP1. Interacts with EIF4A3.

Its subcellular location is the nucleus. It is found in the nucleoplasm. The protein resides in the nucleolus. Its function is as follows. Export adapter involved in nuclear export of spliced and unspliced mRNA. Plays a role in disease resistance. Mediates multiple defense responses triggered by NEP1, including stomatal closure, hypersensitive cell death (HCD) and defense-related gene expression. The sequence is that of THO complex subunit 4D from Arabidopsis thaliana (Mouse-ear cress).